A 118-amino-acid polypeptide reads, in one-letter code: Probable non-functional immunoglobulin lambda variable 2-33 (118 aa).

Positions 1 to 19 (MAWALLLLTLLTQGTGSWA) are cleaved as a signal peptide. The segment at 20-44 (QSALTQPPFVSGAPGQSVTISCTGT) is framework-1. The Ig-like domain occupies 34 to 118 (GQSVTISCTG…CSLYSSSYTF (85 aa)). A disulfide bond links cysteine 41 and cysteine 109. The segment at 45–53 (SSDVGDYDH) is complementarity-determining-1. The framework-2 stretch occupies residues 54–70 (VFWYQKRLSTTSRLLIY). The tract at residues 71 to 73 (NVN) is complementarity-determining-2. Residues 74–109 (TRPSGISDLFSGSKSGNMASLTISGLKSEVEANYHC) are framework-3. Residues 110-118 (SLYSSSYTF) are complementarity-determining-3.

Immunoglobulins are composed of two identical heavy chains and two identical light chains; disulfide-linked.

It localises to the secreted. The protein localises to the cell membrane. In terms of biological role, probable non-functional open reading frame (ORF) of V region of the variable domain of immunoglobulin light chains. Non-functional ORF generally cannot participate in the synthesis of a productive immunoglobulin chain due to altered V-(D)-J or switch recombination and/or splicing site (at mRNA level) and/or conserved amino acid change (protein level). Immunoglobulins, also known as antibodies, are membrane-bound or secreted glycoproteins produced by B lymphocytes. In the recognition phase of humoral immunity, the membrane-bound immunoglobulins serve as receptors which, upon binding of a specific antigen, trigger the clonal expansion and differentiation of B lymphocytes into immunoglobulins-secreting plasma cells. Secreted immunoglobulins mediate the effector phase of humoral immunity, which results in the elimination of bound antigens. The antigen binding site is formed by the variable domain of one heavy chain, together with that of its associated light chain. Thus, each immunoglobulin has two antigen binding sites with remarkable affinity for a particular antigen. The variable domains are assembled by a process called V-(D)-J rearrangement and can then be subjected to somatic hypermutations which, after exposure to antigen and selection, allow affinity maturation for a particular antigen. This chain is Probable non-functional immunoglobulin lambda variable 2-33, found in Homo sapiens (Human).